The sequence spans 391 residues: Carbamoyl phosphate synthase small chain (391 aa).

Positions 1–199 are CPSase; sequence MVRISGFCCA…TWEFIEGPTT (199 aa). L-glutamine contacts are provided by S61, G251, and G253. The 186-residue stretch at 203–388 folds into the Glutamine amidotransferase type-1 domain; that stretch reads TVVAIDFGVK…VALMRDRQPT (186 aa). C279 (nucleophile) is an active-site residue. The L-glutamine site is built by L280, Q283, N319, G321, and F322. Residues H361 and E363 contribute to the active site.

Belongs to the CarA family. As to quaternary structure, composed of two chains; the small (or glutamine) chain promotes the hydrolysis of glutamine to ammonia, which is used by the large (or ammonia) chain to synthesize carbamoyl phosphate. Tetramer of heterodimers (alpha,beta)4.

The enzyme catalyses hydrogencarbonate + L-glutamine + 2 ATP + H2O = carbamoyl phosphate + L-glutamate + 2 ADP + phosphate + 2 H(+). It carries out the reaction L-glutamine + H2O = L-glutamate + NH4(+). The protein operates within amino-acid biosynthesis; L-arginine biosynthesis; carbamoyl phosphate from bicarbonate: step 1/1. It participates in pyrimidine metabolism; UMP biosynthesis via de novo pathway; (S)-dihydroorotate from bicarbonate: step 1/3. Its function is as follows. Small subunit of the glutamine-dependent carbamoyl phosphate synthetase (CPSase). CPSase catalyzes the formation of carbamoyl phosphate from the ammonia moiety of glutamine, carbonate, and phosphate donated by ATP, constituting the first step of 2 biosynthetic pathways, one leading to arginine and/or urea and the other to pyrimidine nucleotides. The small subunit (glutamine amidotransferase) binds and cleaves glutamine to supply the large subunit with the substrate ammonia. The protein is Carbamoyl phosphate synthase small chain of Synechococcus sp. (strain ATCC 27144 / PCC 6301 / SAUG 1402/1) (Anacystis nidulans).